Reading from the N-terminus, the 138-residue chain is Gamma-glutamylaminecyclotransferase (138 aa).

Glu-63 (proton acceptor) is an active-site residue.

This sequence belongs to the gamma-glutamylcyclotransferase family.

The enzyme catalyses epsilon-(gamma-L-glutamyl)-L-lysine = 5-oxo-L-proline + L-lysine. Functionally, may contribute to degradation of proteins cross-linked by transglutaminases by degrading the cross-link between a lysine and a glutamic acid residue. Catalyzes the formation of 5-oxo-L-proline from L-gamma-glutamyl-L-epsilon-lysine. In Xenopus laevis (African clawed frog), this protein is Gamma-glutamylaminecyclotransferase (ggact).